Reading from the N-terminus, the 185-residue chain is UPF0149 protein PFL_5969 (185 aa).

The protein belongs to the UPF0149 family.

The chain is UPF0149 protein PFL_5969 from Pseudomonas fluorescens (strain ATCC BAA-477 / NRRL B-23932 / Pf-5).